Reading from the N-terminus, the 376-residue chain is 1-acyl-sn-glycerol-3-phosphate acyltransferase gamma (376 aa).

Topologically, residues 1–124 are cytoplasmic; it reads MGLLAFLKTQ…LGSSKVLAKK (124 aa). Positions 96–101 match the HXXXXD motif motif; sequence HNFEID. The chain crosses the membrane as a helical span at residues 125–145; sequence ELLYVPLIGWTWYFLEIVFCK. The Lumenal portion of the chain corresponds to 146–316; sequence RKWEEDRDTV…TLLNFLSWAT (171 aa). A helical transmembrane segment spans residues 317 to 339; the sequence is ILLSPLFSFVLGVFASGSPLLIL. Residues 340 to 376 lie on the Cytoplasmic side of the membrane; that stretch reads TFLGFVGAASFGVRRLIGVTEIEKGSSYGNQEFKKKE.

This sequence belongs to the 1-acyl-sn-glycerol-3-phosphate acyltransferase family.

Its subcellular location is the endoplasmic reticulum membrane. The protein localises to the nucleus envelope. It catalyses the reaction a 1-acyl-sn-glycero-3-phosphate + an acyl-CoA = a 1,2-diacyl-sn-glycero-3-phosphate + CoA. The catalysed reaction is pentadecanoyl-CoA + 1-(9Z-octadecenoyl)-sn-glycero-3-phosphate = 1-(9Z)-octadecenoyl-2-pentadecanoyl-sn-glycero-3-phosphate + CoA. It carries out the reaction heptadecanoyl-CoA + 1-(9Z-octadecenoyl)-sn-glycero-3-phosphate = 1-(9Z)-octadecenoyl-2-heptadecanoyl-sn-glycero-3-phosphate + CoA. The enzyme catalyses 1-(9Z-octadecenoyl)-sn-glycero-3-phosphate + octadecanoyl-CoA = 1-(9Z-octadecenoyl)-2-octadecanoyl-sn-glycero-3-phosphate + CoA. It catalyses the reaction nonadecanoyl-CoA + 1-(9Z-octadecenoyl)-sn-glycero-3-phosphate = 1-(9Z)-octadecenoyl-2-nonadecanoyl-sn-glycero-3-phosphate + CoA. The catalysed reaction is 1-(9Z-octadecenoyl)-sn-glycero-3-phosphate + (5Z,8Z,11Z,14Z)-eicosatetraenoyl-CoA = 1-(9Z)-octadecenoyl-2-(5Z,8Z,11Z,14Z)-eicosatetraenoyl-sn-glycero-3-phosphate + CoA. It carries out the reaction 1-(9Z-octadecenoyl)-sn-glycero-3-phosphate + (9Z)-octadecenoyl-CoA = 1,2-di-(9Z-octadecenoyl)-sn-glycero-3-phosphate + CoA. The enzyme catalyses 1-(9Z-octadecenoyl)-sn-glycero-3-phosphate + (9Z,12Z)-octadecadienoyl-CoA = 1-(9Z)-octadecenoyl-2-(9Z,12Z)-octadecadienoyl-sn-glycero-3-phosphate + CoA. It catalyses the reaction 1-(9Z-octadecenoyl)-sn-glycero-3-phosphocholine + (5Z,8Z,11Z,14Z)-eicosatetraenoyl-CoA = 1-(9Z)-octadecenoyl-2-(5Z,8Z,11Z,14Z)-icosatetraenoyl-sn-glycero-3-phosphocholine + CoA. The catalysed reaction is 1-(9Z-octadecenoyl)-sn-glycero-3-phospho-(1D-myo-inositol) + (5Z,8Z,11Z,14Z)-eicosatetraenoyl-CoA = 1-(9Z-octadecenoyl)-2-(5Z,8Z,11Z,14Z-eicosatetraenoyl)-sn-glycero-3-phospho-1D-myo-inositol + CoA. It carries out the reaction 1-(9Z-octadecenoyl)-sn-glycero-3-phospho-L-serine + (5Z,8Z,11Z,14Z)-eicosatetraenoyl-CoA = 1-(9Z-octadecenoyl)-2-(5Z,8Z,11Z,14Z-eicosatetraenoyl)-sn-glycero-3-phospho-L-serine + CoA. The enzyme catalyses 1-hexadecanoyl-sn-glycero-3-phosphate + (9Z)-octadecenoyl-CoA = 1-hexadecanoyl-2-(9Z-octadecenoyl)-sn-glycero-3-phosphate + CoA. It catalyses the reaction 1-hexadecanoyl-sn-glycero-3-phosphate + (5Z,8Z,11Z,14Z)-eicosatetraenoyl-CoA = 1-hexadecanoyl-2-(5Z,8Z,11Z,14Z-eicosatetraenoyl)-sn-glycero-3-phosphate + CoA. The catalysed reaction is 1-heptadecanoyl-sn-glycero-3-phosphate + (5Z,8Z,11Z,14Z)-eicosatetraenoyl-CoA = 1-heptadecanoyl-2-(5Z,8Z,11Z,14Z)-eicosatetraenoyl-sn-glycero-3-phosphate + CoA. It carries out the reaction 1-octadecanoyl-sn-glycero-3-phosphate + (9Z)-octadecenoyl-CoA = 1-octadecanoyl-2-(9Z-octadecenoyl)-sn-glycero-3-phosphate + CoA. The enzyme catalyses 1-octadecanoyl-sn-glycero-3-phosphate + (5Z,8Z,11Z,14Z)-eicosatetraenoyl-CoA = 1-octadecanoyl-2-(5Z,8Z,11Z,14Z-eicosatetraenoyl)-sn-glycero-3-phosphate + CoA. It catalyses the reaction 1-(9Z-octadecenoyl)-sn-glycero-3-phosphate + hexadecanoyl-CoA = 1-hexadecanoyl-2-(9Z-octadecenoyl)-sn-glycero-3-phosphate + CoA. The catalysed reaction is 1-O-(9Z-octadecenyl)-sn-glycero-3-phosphate + (5Z,8Z,11Z,14Z)-eicosatetraenoyl-CoA = 1-O-(9Z-octadecenyl)-2-(5Z,8Z,11Z,14Z-eicosatetraenoyl)-sn-glycero-3-phosphate + CoA. It carries out the reaction a 1-acyl-sn-glycero-3-phospho-(1D-myo-inositol) + (5Z,8Z,11Z,14Z)-eicosatetraenoyl-CoA = a 1-acyl-2-(5Z,8Z,11Z,14Z-eicosatetraenoyl)-sn-glycero-3-phospho-(1D-myo-inositol) + CoA. The protein operates within phospholipid metabolism; CDP-diacylglycerol biosynthesis; CDP-diacylglycerol from sn-glycerol 3-phosphate: step 2/3. Functionally, converts 1-acyl-sn-glycerol-3-phosphate (lysophosphatidic acid or LPA) into 1,2-diacyl-sn-glycerol-3-phosphate (phosphatidic acid or PA) by incorporating an acyl moiety at the sn-2 position of the glycerol backbone. Acts on LPA containing saturated or unsaturated fatty acids C16:0-C20:4 at the sn-1 position using C18:1, C20:4 or C18:2-CoA as the acyl donor. Also acts on lysophosphatidylcholine, lysophosphatidylinositol and lysophosphatidylserine using C18:1 or C20:4-CoA. Has a preference for arachidonoyl-CoA as a donor. Also has a modest lysophosphatidylinositol acyltransferase (LPIAT) activity, converts lysophosphatidylinositol (LPI) into phosphatidylinositol. This Pongo abelii (Sumatran orangutan) protein is 1-acyl-sn-glycerol-3-phosphate acyltransferase gamma (AGPAT3).